The following is a 244-amino-acid chain: Fumarate reductase iron-sulfur subunit (244 aa).

Tyrosine 14 contacts a menaquinone. Residues proline 16 to phenylalanine 97 form the 2Fe-2S ferredoxin-type domain. 4 residues coordinate [2Fe-2S] cluster: cysteine 58, cysteine 63, cysteine 66, and cysteine 78. Residues methionine 140–isoleucine 169 form the 4Fe-4S ferredoxin-type domain. 3 residues coordinate [4Fe-4S] cluster: cysteine 149, cysteine 152, and cysteine 155. Cysteine 159, cysteine 205, and cysteine 211 together coordinate [3Fe-4S] cluster. Cysteine 215 provides a ligand contact to [4Fe-4S] cluster. Residue glutamine 226–lysine 229 participates in a menaquinone binding.

It belongs to the succinate dehydrogenase/fumarate reductase iron-sulfur protein family. In terms of assembly, fumarate dehydrogenase forms part of an enzyme complex containing four subunits: a flavoprotein, an iron-sulfur, and two hydrophobic anchor proteins. Requires [2Fe-2S] cluster as cofactor. It depends on [3Fe-4S] cluster as a cofactor. [4Fe-4S] cluster serves as cofactor.

The protein localises to the cell inner membrane. The enzyme catalyses a quinone + succinate = fumarate + a quinol. It carries out the reaction a menaquinone + succinate = a menaquinol + fumarate. In terms of biological role, two distinct, membrane-bound, FAD-containing enzymes are responsible for the catalysis of fumarate and succinate interconversion; the fumarate reductase is used in anaerobic growth, and the succinate dehydrogenase is used in aerobic growth. In Escherichia coli O157:H7, this protein is Fumarate reductase iron-sulfur subunit (frdB).